We begin with the raw amino-acid sequence, 270 residues long: Urease accessory protein UreD (270 aa).

It belongs to the UreD family. UreD, UreF and UreG form a complex that acts as a GTP-hydrolysis-dependent molecular chaperone, activating the urease apoprotein by helping to assemble the nickel containing metallocenter of UreC. The UreE protein probably delivers the nickel.

Its subcellular location is the cytoplasm. In terms of biological role, required for maturation of urease via the functional incorporation of the urease nickel metallocenter. The polypeptide is Urease accessory protein UreD (Actinobacillus pleuropneumoniae serotype 5b (strain L20)).